The primary structure comprises 84 residues: Magnetosome protein MamR (84 aa).

Belongs to the magnetosome MamR family.

It localises to the magnetosome. Functionally, may play a role in controlling magnetite number and size. Coexpression of mamLQRBIEMO in a deletion of the 17 gene mamAB operon restores magnetosome vesicle formation but not magnetite biosynthesis. The protein is Magnetosome protein MamR of Magnetospirillum gryphiswaldense (strain DSM 6361 / JCM 21280 / NBRC 15271 / MSR-1).